A 469-amino-acid polypeptide reads, in one-letter code: Properdin (469 aa).

Residues 1–27 form the signal peptide; the sequence is MITEGAQAPRLLLPPLLLLLTLPATGS. TSP type-1 domains follow at residues 28-76, 77-134, 136-191, 193-255, 257-313, 315-377, and 379-462; these read DPVL…QPCR, SPRW…QCCP, MGGW…QSCP, HGAW…PPCP, AGSW…VPCP, DGEW…QHCP, and KGSW…PACK. Intrachain disulfides connect Cys-32–Cys-56, Cys-43–Cys-72, and Cys-57–Cys-75. 2 C-linked (Man) tryptophan glycosylation sites follow: Trp-83 and Trp-86. 7 disulfide bridges follow: Cys-89–Cys-127, Cys-93–Cys-133, Cys-104–Cys-111, Cys-132–Cys-170, Cys-148–Cys-184, Cys-152–Cys-190, and Cys-163–Cys-174. C-linked (Man) tryptophan glycans are attached at residues Trp-139, Trp-142, and Trp-145. An O-linked (Fuc...) threonine glycan is attached at Thr-151. 3 C-linked (Man) tryptophan glycosylation sites follow: Trp-196, Trp-199, and Trp-202. 3 disulfide bridges follow: Cys-205–Cys-248, Cys-209–Cys-254, and Cys-224–Cys-238. Ser-208 carries an O-linked (Fuc...) serine glycan. The tract at residues 218-238 is disordered; sequence ETRSRKCSAPEPSQKPPGKPC. 2 C-linked (Man) tryptophan glycosylation sites follow: Trp-260 and Trp-263. 3 disulfide bridges follow: Cys-269/Cys-306, Cys-273/Cys-312, and Cys-284/Cys-296. Thr-272 carries an O-linked (Fuc...) threonine glycan. 2 C-linked (Man) tryptophan glycosylation sites follow: Trp-321 and Trp-324. 3 disulfides stabilise this stretch: Cys-327/Cys-370, Cys-337/Cys-376, and Cys-350/Cys-360. Residues 351–359 are interaction with Complement C3 beta chain; it reads KGRKFDGHR. Residues Trp-382, Trp-385, and Trp-388 are each glycosylated (C-linked (Man) tryptophan). Disulfide bonds link Cys-391-Cys-455, Cys-395-Cys-461, and Cys-407-Cys-439. N-linked (GlcNAc...) asparagine glycosylation is present at Asn-428.

As to quaternary structure, in plasma, properdin exists as dimers, trimers or tetramers in the relative proportions of 26:54:20. Interacts with the pro-C3-convertase enzyme complex (C3b-Bb) comprised of Complement C3 beta chain (C3b) and the Complement factor B Bb fragment (Bb), where it binds (via its TSP type-1 5 domain) with C3b and Bb. This interaction stabilizes the complex and allows it to become the active C3-convertase enzyme complex (C3b-Bb-FP). Interacts with C3b. Interacts with CFB.

Its subcellular location is the secreted. Functionally, a positive regulator of the alternate pathway of complement. It binds to and stabilizes the C3- and C5-convertase enzyme complexes. Inhibits CFI-CFH mediated degradation of Inhibits CFI-CFH mediated degradation of Complement C3 beta chain (C3b). This is Properdin (CFP) from Pongo abelii (Sumatran orangutan).